The chain runs to 124 residues: Small ribosomal subunit protein eS6 (124 aa).

Belongs to the eukaryotic ribosomal protein eS6 family.

The chain is Small ribosomal subunit protein eS6 from Thermoplasma acidophilum (strain ATCC 25905 / DSM 1728 / JCM 9062 / NBRC 15155 / AMRC-C165).